We begin with the raw amino-acid sequence, 1052 residues long: F-box/WD repeat-containing protein 10 (1052 aa).

One copy of the WD 1 repeat lies at G169 to P206. Positions D276–G323 constitute an F-box domain. 6 WD repeats span residues S409–V447, G451–I490, G493–R532, K534–T569, G572–L609, and A611–K652. The stretch at Y690–C719 forms a coiled coil. The interval L766–S805 is disordered. A compositionally biased stretch (basic and acidic residues) spans P775–Q786. A coiled-coil region spans residues V986 to T1010.

Functionally, probable substrate-recognition component of a SCF (SKP1-CUL1-F-box protein)-type E3 ubiquitin ligase complex which mediates the ubiquitination and subsequent proteasomal degradation of target proteins. Overexpression is leading to degradation of CBX5 and CBX1. This Homo sapiens (Human) protein is F-box/WD repeat-containing protein 10 (FBXW10).